The primary structure comprises 1187 residues: ATP-dependent DNA helicase MPH1 (1187 aa).

Residues 144 to 311 (IVERAFYDNL…QIIDNLNISK (168 aa)) enclose the Helicase ATP-binding domain. Residue 157-164 (LPTGLGKT) coordinates ATP. The short motif at 259 to 262 (DEAH) is the DEAH box element. A Helicase C-terminal domain is found at 486 to 681 (ELDDFFKNHE…FIQLRPQHRM (196 aa)). Disordered stretches follow at residues 542-576 (VENFGKKKQKGQTKKKKDERPSTRSSSENAQMTGM), 781-848 (DKLV…NNQV), and 941-1003 (PEKP…LGVK). Positions 547-556 (KKKQKGQTKK) are enriched in basic residues. A compositionally biased stretch (polar residues) spans 564-576 (TRSSSENAQMTGM). Residues 781 to 817 (DKLVDSDSESEVDKENENVIQEVDKSKNQEQNDHIIT) are compositionally biased toward basic and acidic residues. Residues 822 to 848 (TEQSVAGNTKSTTNGTSYSEPENNNQV) are compositionally biased toward polar residues. A compositionally biased stretch (low complexity) spans 967–977 (SNSISIPSSTT). The span at 980-989 (SHNEVTRKVV) shows a compositional bias: basic and acidic residues.

The protein belongs to the DEAD box helicase family. DEAH subfamily. FANCM sub-subfamily. As to quaternary structure, interacts with the MHF histone-fold complex to form the FANCM-MHF complex.

It localises to the nucleus. It carries out the reaction ATP + H2O = ADP + phosphate + H(+). Functionally, ATP-dependent DNA helicase involved in DNA damage repair by homologous recombination and in genome maintenance. Capable of unwinding D-loops. Plays a role in limiting crossover recombinants during mitotic DNA double-strand break (DSB) repair. Component of a FANCM-MHF complex which promotes gene conversion at blocked replication forks, probably by reversal of the stalled fork. The chain is ATP-dependent DNA helicase MPH1 from Candida albicans (strain SC5314 / ATCC MYA-2876) (Yeast).